The chain runs to 627 residues: Chaperone protein HtpG (627 aa).

Positions 1-343 (MATQEFQAET…SEDLSLNISR (343 aa)) are a; substrate-binding. Residues 344–553 (EMLQQDKQLK…EGEISIEMEK (210 aa)) form a b region. Residues 554–627 (VLQSMPNNQN…YTNNVCKIMS (74 aa)) form a c region.

The protein belongs to the heat shock protein 90 family. As to quaternary structure, homodimer.

It is found in the cytoplasm. Functionally, molecular chaperone. Has ATPase activity. The chain is Chaperone protein HtpG from Natranaerobius thermophilus (strain ATCC BAA-1301 / DSM 18059 / JW/NM-WN-LF).